The sequence spans 360 residues: Peptide chain release factor 1 (360 aa).

Position 235 is an N5-methylglutamine (Gln235). A compositionally biased stretch (basic and acidic residues) spans 291 to 308 (ASERRNLLGTGDRSDRNR). The interval 291 to 312 (ASERRNLLGTGDRSDRNRTYNF) is disordered.

It belongs to the prokaryotic/mitochondrial release factor family. Post-translationally, methylated by PrmC. Methylation increases the termination efficiency of RF1.

It is found in the cytoplasm. In terms of biological role, peptide chain release factor 1 directs the termination of translation in response to the peptide chain termination codons UAG and UAA. The chain is Peptide chain release factor 1 from Yersinia pseudotuberculosis serotype O:1b (strain IP 31758).